The sequence spans 37 residues: Large ribosomal subunit protein bL36c (37 aa).

The protein belongs to the bacterial ribosomal protein bL36 family.

It is found in the plastid. Its subcellular location is the organellar chromatophore. The protein is Large ribosomal subunit protein bL36c of Paulinella chromatophora.